We begin with the raw amino-acid sequence, 165 residues long: UPF0254 protein MMP0935 (165 aa).

The protein belongs to the UPF0254 family.

This chain is UPF0254 protein MMP0935, found in Methanococcus maripaludis (strain DSM 14266 / JCM 13030 / NBRC 101832 / S2 / LL).